The primary structure comprises 314 residues: Ribosomal RNA small subunit methyltransferase H (314 aa).

Residues 36-38, aspartate 56, phenylalanine 82, aspartate 104, and glutamine 111 each bind S-adenosyl-L-methionine; that span reads GGH.

This sequence belongs to the methyltransferase superfamily. RsmH family.

The protein localises to the cytoplasm. It catalyses the reaction cytidine(1402) in 16S rRNA + S-adenosyl-L-methionine = N(4)-methylcytidine(1402) in 16S rRNA + S-adenosyl-L-homocysteine + H(+). In terms of biological role, specifically methylates the N4 position of cytidine in position 1402 (C1402) of 16S rRNA. This Ectopseudomonas mendocina (strain ymp) (Pseudomonas mendocina) protein is Ribosomal RNA small subunit methyltransferase H.